The sequence spans 388 residues: Processive diacylglycerol beta-glucosyltransferase (388 aa).

It belongs to the glycosyltransferase 28 family. UgtP subfamily.

The protein resides in the cell membrane. The catalysed reaction is a 1,2-diacyl-3-O-(beta-D-glucopyranosyl)-sn-glycerol + UDP-alpha-D-glucose = a 1,2-diacyl-3-O-(beta-D-Glc-(1-&gt;6)-beta-D-Glc)-sn-glycerol + UDP + H(+). It catalyses the reaction a 1,2-diacyl-3-O-(beta-D-Glc-(1-&gt;6)-beta-D-Glc)-sn-glycerol + UDP-alpha-D-glucose = a 1,2-diacyl-3-O-(beta-D-Glc-(1-&gt;6)-beta-D-Glc-(1-&gt;6)-beta-D-Glc)-sn-glycerol + UDP + H(+). The enzyme catalyses a 1,2-diacyl-sn-glycerol + UDP-alpha-D-glucose = a 1,2-diacyl-3-O-(beta-D-glucopyranosyl)-sn-glycerol + UDP + H(+). It functions in the pathway glycolipid metabolism; diglucosyl-diacylglycerol biosynthesis. Functionally, processive glucosyltransferase involved in the biosynthesis of both the bilayer- and non-bilayer-forming membrane glucolipids. Is able to successively transfer up to three glucosyl residues to diacylglycerol (DAG), thereby catalyzing the formation of beta-monoglucosyl-DAG (3-O-(beta-D-glucopyranosyl)-1,2-diacyl-sn-glycerol), beta-diglucosyl-DAG (3-O-(beta-D-glucopyranosyl-beta-(1-&gt;6)-D-glucopyranosyl)-1,2-diacyl-sn-glycerol) and beta-triglucosyl-DAG (3-O-(beta-D-glucopyranosyl-beta-(1-&gt;6)-D-glucopyranosyl-beta-(1-&gt;6)-D-glucopyranosyl)-1,2-diacyl-sn-glycerol). Beta-diglucosyl-DAG is the predominant glycolipid found in Bacillales and is also used as a membrane anchor for lipoteichoic acid (LTA). The chain is Processive diacylglycerol beta-glucosyltransferase from Bacillus cereus (strain ZK / E33L).